The chain runs to 335 residues: Cut9-interacting protein scn1 (335 aa).

The protein belongs to the metallo-dependent hydrolases superfamily.

Its function is as follows. Interacts with cut9. This chain is Cut9-interacting protein scn1 (scn1), found in Schizosaccharomyces pombe (strain 972 / ATCC 24843) (Fission yeast).